Here is a 364-residue protein sequence, read N- to C-terminus: Methylthioribose-1-phosphate isomerase (364 aa).

Substrate-binding positions include 53 to 55 (RGA), R90, and Q203. Residue D244 is the Proton donor of the active site. 254–255 (NK) lines the substrate pocket.

The protein belongs to the eIF-2B alpha/beta/delta subunits family. MtnA subfamily.

It carries out the reaction 5-(methylsulfanyl)-alpha-D-ribose 1-phosphate = 5-(methylsulfanyl)-D-ribulose 1-phosphate. The protein operates within amino-acid biosynthesis; L-methionine biosynthesis via salvage pathway; L-methionine from S-methyl-5-thio-alpha-D-ribose 1-phosphate: step 1/6. Functionally, catalyzes the interconversion of methylthioribose-1-phosphate (MTR-1-P) into methylthioribulose-1-phosphate (MTRu-1-P). In Sinorhizobium medicae (strain WSM419) (Ensifer medicae), this protein is Methylthioribose-1-phosphate isomerase.